A 450-amino-acid chain; its full sequence is Tubulin alpha-5 chain (450 aa).

Residues glutamine 11, glutamate 71, glycine 144, threonine 145, threonine 179, asparagine 206, and asparagine 228 each coordinate GTP. Mg(2+) is bound at residue glutamate 71. Glutamate 254 is an active-site residue. Position 349 is a phosphothreonine (threonine 349). The disordered stretch occupies residues glutamate 429 to tyrosine 450. Acidic residues predominate over residues aspartate 431 to tyrosine 450.

This sequence belongs to the tubulin family. In terms of assembly, dimer of alpha and beta chains. A typical microtubule is a hollow water-filled tube with an outer diameter of 25 nm and an inner diameter of 15 nM. Alpha-beta heterodimers associate head-to-tail to form protofilaments running lengthwise along the microtubule wall with the beta-tubulin subunit facing the microtubule plus end conferring a structural polarity. Microtubules usually have 13 protofilaments but different protofilament numbers can be found in some organisms and specialized cells. Mg(2+) serves as cofactor. Post-translationally, undergoes a tyrosination/detyrosination cycle, the cyclic removal and re-addition of a C-terminal tyrosine residue by the enzymes tubulin tyrosine carboxypeptidase (TTCP) and tubulin tyrosine ligase (TTL), respectively.

It is found in the cytoplasm. It localises to the cytoskeleton. It catalyses the reaction GTP + H2O = GDP + phosphate + H(+). In terms of biological role, tubulin is the major constituent of microtubules, a cylinder consisting of laterally associated linear protofilaments composed of alpha- and beta-tubulin heterodimers. Microtubules grow by the addition of GTP-tubulin dimers to the microtubule end, where a stabilizing cap forms. Below the cap, tubulin dimers are in GDP-bound state, owing to GTPase activity of alpha-tubulin. The chain is Tubulin alpha-5 chain (TUBA5) from Arabidopsis thaliana (Mouse-ear cress).